The chain runs to 398 residues: Cholinephosphotransferase 1 (398 aa).

Ala-2 is subject to N-acetylalanine. Topologically, residues 2-62 (AAGAGARPAP…LLQWIPLWMA (61 aa)) are cytoplasmic. The chain crosses the membrane as a helical span at residues 63–83 (PNTITLIGLAINLVTTLVLIF). Asn-64 contacts CDP-choline. At 84-93 (YCPTVTEEAP) the chain is on the lumenal side. The chain crosses the membrane as a helical span at residues 94–118 (YWTYLLCALGLFIYQSLDAIDGKQA). Residues Asp-111 and Asp-114 each contribute to the Mg(2+) site. Residue Arg-119 participates in CDP-choline binding. Residues 119–125 (RRTNSCS) lie on the Cytoplasmic side of the membrane. A helical transmembrane segment spans residues 126–150 (PLGELFDHGCDSLSTVFMAIGASIA). Mg(2+) is bound at residue Asp-132. His-133 (proton acceptor) is an active-site residue. Residue Asp-136 coordinates Mg(2+). At 151–160 (VRLGTHPDWL) the chain is on the lumenal side. A helical membrane pass occupies residues 161–179 (FFCSFVGMFMFYCAHWQTY). At 180–190 (VSGVLRFGRVD) the chain is on the cytoplasmic side. A helical membrane pass occupies residues 191–207 (VTEIQVALVIVFMLSTF). The Lumenal portion of the chain corresponds to 208 to 222 (GGATMWDYTIPILEI). Residues 223 to 248 (KLKIVPVLGVVGGLIFSCSNYFHVIL) form a helical membrane-spanning segment. The Cytoplasmic portion of the chain corresponds to 249-265 (HGGVGKNGSTIAGTSVL). Residues 266 to 281 (SPGLHIGLIIILAIMI) traverse the membrane as a helical segment. The Lumenal segment spans residues 282-293 (YKKSATNMFEKH). Residues 294–316 (PCLYTLMFGCVFAKVAQKLVIAH) traverse the membrane as a helical segment. Residues 317-329 (MTKSELYLQDTVF) lie on the Cytoplasmic side of the membrane. A helical transmembrane segment spans residues 330-339 (IGPGLLFLDQ). Residues 340-346 (YFNNFID) are Lumenal-facing. Residues 347-376 (EYVVLWIAMVISSFDMMIYFTSLCLQISRH) traverse the membrane as a helical segment. The Cytoplasmic portion of the chain corresponds to 377 to 398 (LHLNIFKTSCQQAPEQVYKHID).

This sequence belongs to the CDP-alcohol phosphatidyltransferase class-I family. Requires Mg(2+) as cofactor. Mn(2+) is required as a cofactor. In terms of tissue distribution, expressed in brain, heart, lung, liver, spleen, intestine and muscle. Down-regulated in kidney of type 2 diabetic KK/Ta mice.

The protein localises to the golgi apparatus membrane. The enzyme catalyses CDP-choline + a 1,2-diacyl-sn-glycerol = a 1,2-diacyl-sn-glycero-3-phosphocholine + CMP + H(+). It carries out the reaction 1-octadecanoyl-2-(5Z,8Z,11Z,14Z-eicosatetraenoyl)-sn-glycerol + CDP-choline = 1-octadecanoyl-2-(5Z,8Z,11Z,14Z-eicosatetraenoyl)-sn-glycero-3-phosphocholine + CMP + H(+). The catalysed reaction is 1-hexadecanoyl-2-(9Z-octadecenoyl)-sn-glycerol + CDP-choline = 1-hexadecanoyl-2-(9Z-octadecenoyl)-sn-glycero-3-phosphocholine + CMP + H(+). It catalyses the reaction 1-hexadecanoyl-2-(4Z,7Z,10Z,13Z,16Z,19Z-docosahexaenoyl)-sn-glycerol + CDP-choline = 1-hexadecanoyl-2-(4Z,7Z,10Z,13Z,16Z,19Z-docosahexaenoyl)-sn-glycero-3-phosphocholine + CMP + H(+). The enzyme catalyses 1,2-dioctanoyl-sn-glycerol + CDP-choline = 1,2-dioctanoyl-sn-glycero-3-phosphocholine + CMP + H(+). It functions in the pathway phospholipid metabolism; phosphatidylcholine biosynthesis; phosphatidylcholine from phosphocholine: step 2/2. Functionally, catalyzes the final step of de novo phosphatidylcholine (PC) synthesis, i.e. the transfer of choline phosphate from CDP-choline to the free hydroxyl of a diacylglycerol (DAG), producing a PC. It thereby plays a central role in the formation and maintenance of vesicular membranes. The polypeptide is Cholinephosphotransferase 1 (Mus musculus (Mouse)).